The chain runs to 394 residues: Na(+)/H(+) antiporter NhaA (394 aa).

11 consecutive transmembrane segments (helical) span residues 11-31 (LEAA…IFAN), 59-79 (LLMW…GMEV), 95-115 (IFPA…YWFI), 125-145 (GWAI…ALLS), 155-175 (FLLA…ALFF), 177-197 (HEMS…LVAM), 203-220 (TGLI…ASVL), 254-274 (ALAP…NAGV), 296-316 (LIIG…LLGI), 328-348 (IFAI…IAGL), and 365-385 (LGIL…LKIT).

This sequence belongs to the NhaA Na(+)/H(+) (TC 2.A.33) antiporter family.

The protein resides in the cell inner membrane. It catalyses the reaction Na(+)(in) + 2 H(+)(out) = Na(+)(out) + 2 H(+)(in). Its function is as follows. Na(+)/H(+) antiporter that extrudes sodium in exchange for external protons. The polypeptide is Na(+)/H(+) antiporter NhaA (Actinobacillus pleuropneumoniae serotype 7 (strain AP76)).